The chain runs to 431 residues: Histidinol dehydrogenase 1 (431 aa).

Residues Tyr127, Gln188, and Asn211 each contribute to the NAD(+) site. Substrate-binding residues include Ser234, Gln256, and His259. Zn(2+) is bound by residues Gln256 and His259. Catalysis depends on proton acceptor residues Glu324 and His325. Substrate is bound by residues His325, Asp358, Glu412, and His417. A Zn(2+)-binding site is contributed by Asp358. Residue His417 participates in Zn(2+) binding.

This sequence belongs to the histidinol dehydrogenase family. Zn(2+) serves as cofactor.

It catalyses the reaction L-histidinol + 2 NAD(+) + H2O = L-histidine + 2 NADH + 3 H(+). It participates in amino-acid biosynthesis; L-histidine biosynthesis; L-histidine from 5-phospho-alpha-D-ribose 1-diphosphate: step 9/9. In terms of biological role, catalyzes the sequential NAD-dependent oxidations of L-histidinol to L-histidinaldehyde and then to L-histidine. This Nostoc sp. (strain PCC 7120 / SAG 25.82 / UTEX 2576) protein is Histidinol dehydrogenase 1 (hisD1).